The chain runs to 256 residues: Chlorophyll a-b binding protein CP24 10A, chloroplastic (256 aa).

2 helical membrane-spanning segments follow: residues 106-126 (WAMA…IPWF) and 134-154 (AIAP…MGWV).

This sequence belongs to the ELIP/psbS family.

Its subcellular location is the plastid. It localises to the chloroplast thylakoid membrane. The protein is Chlorophyll a-b binding protein CP24 10A, chloroplastic (CAP10A) of Solanum lycopersicum (Tomato).